We begin with the raw amino-acid sequence, 1372 residues long: DNA-directed RNA polymerase subunit beta' (1372 aa).

Zn(2+) contacts are provided by C69, C71, C84, and C87. Residues D460, D462, and D464 each contribute to the Mg(2+) site. Residues C808, C882, C889, and C892 each contribute to the Zn(2+) site.

The protein belongs to the RNA polymerase beta' chain family. In terms of assembly, the RNAP catalytic core consists of 2 alpha, 1 beta, 1 beta' and 1 omega subunit. When a sigma factor is associated with the core the holoenzyme is formed, which can initiate transcription. Mg(2+) serves as cofactor. The cofactor is Zn(2+).

The enzyme catalyses RNA(n) + a ribonucleoside 5'-triphosphate = RNA(n+1) + diphosphate. DNA-dependent RNA polymerase catalyzes the transcription of DNA into RNA using the four ribonucleoside triphosphates as substrates. In Rickettsia typhi (strain ATCC VR-144 / Wilmington), this protein is DNA-directed RNA polymerase subunit beta'.